Reading from the N-terminus, the 597-residue chain is (E)-sabinene hydrate synthase, chloroplastic (597 aa).

The N-terminal 47 residues, 1-47 (MSTISINHVGILRNPLQCKNKRTSINKPWSLSLPRSSPASRLVKPCR), are a transit peptide targeting the chloroplast. Mn(2+) is bound by residues aspartate 353 and aspartate 357. The DDXXD motif motif lies at 353–357 (DDVYD). Homodimerization stretches follow at residues 359-365 (YGTLDEL) and 431-468 (EAGW…VSLP). Positions 495 and 503 each coordinate Mn(2+).

Belongs to the terpene synthase family. In terms of assembly, homodimer. The cofactor is Mn(2+). Requires Mg(2+) as cofactor.

It localises to the plastid. Its subcellular location is the chloroplast. The enzyme catalyses (2E)-geranyl diphosphate + H2O = sabinene hydrate + diphosphate. It participates in secondary metabolite biosynthesis; terpenoid biosynthesis. In terms of biological role, involved in the biosynthesis of phenolic monoterpenes natural products. Monoterpene synthase which catalyzes the conversion of geranyl diphosphate (GPP) to sabinene hydrate, specifically (E)-sabinene hydrate, and the formation of minor amounts and traces of several other monoterpenes (e.g. mainly alpha-pinene, limonene and alpha-terpineol). The polypeptide is (E)-sabinene hydrate synthase, chloroplastic (Thymus vulgaris (Thyme)).